The following is a 488-amino-acid chain: Glutamyl-tRNA(Gln) amidotransferase subunit A (488 aa).

Catalysis depends on charge relay system residues Lys-77 and Ser-152. Residue Ser-176 is the Acyl-ester intermediate of the active site.

It belongs to the amidase family. GatA subfamily. In terms of assembly, heterotrimer of A, B and C subunits.

The enzyme catalyses L-glutamyl-tRNA(Gln) + L-glutamine + ATP + H2O = L-glutaminyl-tRNA(Gln) + L-glutamate + ADP + phosphate + H(+). Its function is as follows. Allows the formation of correctly charged Gln-tRNA(Gln) through the transamidation of misacylated Glu-tRNA(Gln) in organisms which lack glutaminyl-tRNA synthetase. The reaction takes place in the presence of glutamine and ATP through an activated gamma-phospho-Glu-tRNA(Gln). In Streptococcus equi subsp. zooepidemicus (strain MGCS10565), this protein is Glutamyl-tRNA(Gln) amidotransferase subunit A.